A 693-amino-acid chain; its full sequence is Golgin subfamily A member 6A (693 aa).

Residues 14-611 are a coiled coil; that stretch reads LEESRQNKLA…KLLELQELVL (598 aa). Disordered stretches follow at residues 20–69, 497–547, and 661–693; these read NKLA…PGDS, LPGE…GTEQ, and NVEP…MQDT. Positions 54–69 are enriched in polar residues; that stretch reads SPETTTSGGCHSPGDS. Residues 537–547 show a composition bias toward basic and acidic residues; sequence LPKEKADGTEQ. The span at 676-693 shows a compositional bias: polar residues; that stretch reads DNPTVQQIVQLSPVMQDT.

This sequence belongs to the GOLGA6 family. As to expression, highly expressed in seminiferous tubes in testis. Highly expressed in spermatids, barely detectable in late pachytene spermatocytes, and not detectable in spermatogonia. Detected at intermediate levels in pancreas and lymph nodes, and at much lower levels in spleen, peripheral blood leukocytes, skeletal muscle, liver, lung, placenta, brain and heart.

The polypeptide is Golgin subfamily A member 6A (GOLGA6A) (Homo sapiens (Human)).